A 151-amino-acid polypeptide reads, in one-letter code: 3-hydroxyacyl-[acyl-carrier-protein] dehydratase FabZ (151 aa).

Residue His54 is part of the active site.

The protein belongs to the thioester dehydratase family. FabZ subfamily.

The protein resides in the cytoplasm. The catalysed reaction is a (3R)-hydroxyacyl-[ACP] = a (2E)-enoyl-[ACP] + H2O. Involved in unsaturated fatty acids biosynthesis. Catalyzes the dehydration of short chain beta-hydroxyacyl-ACPs and long chain saturated and unsaturated beta-hydroxyacyl-ACPs. The protein is 3-hydroxyacyl-[acyl-carrier-protein] dehydratase FabZ of Erwinia tasmaniensis (strain DSM 17950 / CFBP 7177 / CIP 109463 / NCPPB 4357 / Et1/99).